We begin with the raw amino-acid sequence, 480 residues long: Adenosylhomocysteinase (480 aa).

3 residues coordinate substrate: Thr63, Asp142, and Glu203. An NAD(+)-binding site is contributed by 204-206 (TTT). Substrate is bound by residues Lys233 and Asp237. NAD(+) is bound by residues Asn238, 267 to 272 (GYGDVG), Glu290, Asn325, 346 to 348 (IGH), and Asn394.

It belongs to the adenosylhomocysteinase family. Requires NAD(+) as cofactor.

Its subcellular location is the cytoplasm. The catalysed reaction is S-adenosyl-L-homocysteine + H2O = L-homocysteine + adenosine. It participates in amino-acid biosynthesis; L-homocysteine biosynthesis; L-homocysteine from S-adenosyl-L-homocysteine: step 1/1. May play a key role in the regulation of the intracellular concentration of adenosylhomocysteine. The protein is Adenosylhomocysteinase of Xylella fastidiosa (strain Temecula1 / ATCC 700964).